The primary structure comprises 576 residues: Ferroportin (576 aa).

Residues 1–23 lie on the Cytoplasmic side of the membrane; the sequence is MPKAGEQARQGGCCGSLANYLTS. Residues 24–53 traverse the membrane as a helical segment; that stretch reads AKFLLYLGHSLSTWGDRMWHFAVSVFLVEL. Residues D39 and H43 each coordinate Fe cation. Residues 54–57 lie on the Extracellular side of the membrane; sequence YGNS. A helical membrane pass occupies residues 58–84; the sequence is LLLTAVYGLVVAGSVLVLGAIIGDWVD. Topologically, residues 85–87 are cytoplasmic; the sequence is KNA. The helical transmembrane segment at 88-118 threads the bilayer; sequence RLKVAQTSLVVQNVSVILCGIILMMVFLHKN. Topologically, residues 119–126 are extracellular; sequence ELLTMYHG. A helical transmembrane segment spans residues 127 to 162; that stretch reads WVLTFCYILIITIADVANLASTATAITIQRDWIVVV. At 163–164 the chain is on the cytoplasmic side; sequence AG. The chain crosses the membrane as a helical span at residues 165–195; sequence GDRSKLADMNATIRRIDQLTNILAPMAVGQI. At 196–202 the chain is on the extracellular side; the sequence is MTFGSAV. A helical membrane pass occupies residues 203–229; it reads IGCGFISGWNLVSMCVEYFLLWKVYQK. Residues 230-306 are Cytoplasmic-facing; the sequence is TPALAVKAAL…DGWVSYYNQS (77 aa). Residues 307-333 form a helical membrane-spanning segment; it reads VFLAGMGLAFLYMTVLGFDCITTGYAY. C326 contacts Fe cation. The Extracellular portion of the chain corresponds to 334–338; sequence TQGLS. Residues 339 to 366 traverse the membrane as a helical segment; that stretch reads GSILSILMGASAITGIMGTVAFTWLRRK. The Cytoplasmic segment spans residues 367–368; the sequence is CG. A helical membrane pass occupies residues 369–391; sequence LVRTGLISGFAQLSCLILCVISV. Residues 392–458 lie on the Extracellular side of the membrane; it reads FMPGSPLDLS…ETTPKSVPII (67 aa). N439 carries an N-linked (GlcNAc...) asparagine glycan. Residues 459-488 form a helical membrane-spanning segment; the sequence is SVSLLFAGVIAARIGLWSFDLTVTQLLQEN. Topologically, residues 489 to 493 are cytoplasmic; that stretch reads VIESE. A helical membrane pass occupies residues 494 to 518; it reads RGIINGVQNSMNYLLDLLHFIMVIL. H512 is a Fe cation binding site. The Extracellular segment spans residues 519-521; that stretch reads APN. The helical transmembrane segment at 522–547 threads the bilayer; it reads PEAFGLLVLISVSFVAMGHIMYFRFA. Over 548 to 576 the chain is Cytoplasmic; it reads QKTLGSKLFACGADDEEVTNENQANTSVV.

The protein belongs to the ferroportin (FP) (TC 2.A.100) family. SLC40A subfamily. Identified in a complex with STOM. Interacts with HAMP; affinity of the peptide hormone HAMP for SLC40A1 increases by 80-fold in the presence of iron and the interaction promotes SLC40A1 ubiquitination and degradation. Part of a complex composed of SLC40A1/ferroportin, TF/transferrin and HEPH/hephaestin that transfers iron from cells to transferrin. Post-translationally, polyubiquitinated by RNF217; leading to proteasomal degradation. Under conditions of high systemic iron levels, both the hormone peptide hepcidin/HAMP and holo(iron bound)-transferrin/TF induce the ubiquitination, internalization and proteasomal degradation of SLC40A1 to control iron release from cells.

It localises to the cell membrane. The protein localises to the basolateral cell membrane. The enzyme catalyses Fe(2+)(in) = Fe(2+)(out). During elevated serum iron levels, liver-derived hepcidin/HAMP negatively regulates cell surface ferroportin/SLC40A1 by inducing its ubiquitination, internalization, and degradation. Indeed, hepcidin/HAMP affinity towards ferroportin/SLC40A1 increases by 80-fold in the presence of iron. In terms of biological role, transports Fe(2+) from the inside of a cell to the outside of the cell, playing a key role for maintaining systemic iron homeostasis. Transports iron from intestinal, splenic, hepatic cells, macrophages and erythrocytes into the blood to provide iron to other tissues. Controls therefore dietary iron uptake, iron recycling by macrophages and erythrocytes, and release of iron stores in hepatocytes. When iron is in excess in serum, circulating HAMP/hepcidin levels increase resulting in a degradation of SLC40A1, thus limiting the iron efflux to plasma. The sequence is that of Ferroportin from Canis lupus familiaris (Dog).